The following is a 196-amino-acid chain: Putative adenylate kinase (196 aa).

Residues glycine 10, glycine 12, lysine 13, threonine 14, and serine 15 each contribute to the ATP site. The segment at 30-53 (YLNDLIKEEHLYSEVDEERDSVIA) is NMP. Positions 118–128 (KRGYSEEKINE) are LID. Arginine 119 contributes to the ATP binding site.

This sequence belongs to the adenylate kinase family. AK6 subfamily. As to quaternary structure, interacts with uS11. Not a structural component of 40S pre-ribosomes, but transiently interacts with them by binding to uS11.

It carries out the reaction AMP + ATP = 2 ADP. The catalysed reaction is ATP + H2O = ADP + phosphate + H(+). In terms of biological role, broad-specificity nucleoside monophosphate (NMP) kinase that catalyzes the reversible transfer of the terminal phosphate group between nucleoside triphosphates and monophosphates. Also has ATPase activity. Involved in the late maturation steps of the 30S ribosomal particles, specifically 16S rRNA maturation. While NMP activity is not required for ribosome maturation, ATPase activity is. Associates transiently with small ribosomal subunit protein uS11. ATP hydrolysis breaks the interaction with uS11. May temporarily remove uS11 from the ribosome to enable a conformational change of the ribosomal RNA that is needed for the final maturation step of the small ribosomal subunit. The sequence is that of Putative adenylate kinase from Methanosarcina mazei (strain ATCC BAA-159 / DSM 3647 / Goe1 / Go1 / JCM 11833 / OCM 88) (Methanosarcina frisia).